Reading from the N-terminus, the 144-residue chain is MNFKYIVAVSFLIASAYARSEENDEQSLSQRDILEEESLREIRGIGAKILGGVKTALKGALKELASTYVNGKRTAEDHEVMKRLEAVMRDLDSLDYPEEAAERETRGFNQEEIANLFTKKEKRILGPVIGTIGNVLGGLLKNLG.

Residues Met1–Ala18 form the signal peptide. The propeptide occupies Arg19 to Arg43. At Asn70 the chain carries Asparagine amide. A propeptide spanning residues Thr74–Arg123 is cleaved from the precursor. Position 143 is a leucine amide (Leu143).

The protein belongs to the bombinin family. In terms of tissue distribution, expressed by the skin glands.

It is found in the secreted. Maximin-7 shows antimicrobial activity against bacteria and against the fungus C.albicans. It has little hemolytic activity. Its function is as follows. Maximin-H6 shows antimicrobial activity against bacteria and against the fungus C.albicans. Shows strong hemolytic activity. This Bombina maxima (Giant fire-bellied toad) protein is Maximins 7/H6.